The following is a 494-amino-acid chain: Acetyl-coenzyme A carboxylase carboxyl transferase subunit beta, chloroplastic (494 aa).

The 265-residue stretch at L230–N494 folds into the CoA carboxyltransferase N-terminal domain. Positions 234, 237, 253, and 256 each coordinate Zn(2+). Residues C234–C256 form a C4-type zinc finger.

This sequence belongs to the AccD/PCCB family. As to quaternary structure, acetyl-CoA carboxylase is a heterohexamer composed of biotin carboxyl carrier protein, biotin carboxylase and 2 subunits each of ACCase subunit alpha and ACCase plastid-coded subunit beta (accD). The cofactor is Zn(2+).

Its subcellular location is the plastid. It localises to the chloroplast stroma. It carries out the reaction N(6)-carboxybiotinyl-L-lysyl-[protein] + acetyl-CoA = N(6)-biotinyl-L-lysyl-[protein] + malonyl-CoA. The protein operates within lipid metabolism; malonyl-CoA biosynthesis; malonyl-CoA from acetyl-CoA: step 1/1. Its function is as follows. Component of the acetyl coenzyme A carboxylase (ACC) complex. Biotin carboxylase (BC) catalyzes the carboxylation of biotin on its carrier protein (BCCP) and then the CO(2) group is transferred by the transcarboxylase to acetyl-CoA to form malonyl-CoA. This chain is Acetyl-coenzyme A carboxylase carboxyl transferase subunit beta, chloroplastic, found in Drimys granadensis.